A 305-amino-acid chain; its full sequence is MTVEELKKKKIAVLMGGLSAEREVSLNSGKAVLASLVKQGFRAVGIDVGRDLPQRLAEEQVELAFIALHGRFGEDGSVQGLLELMGIPYTGSGVLASALAIDKIASKVIFASAGLKLAPYQVLRRGEELKLANPLPVVVKPSREGSSVGVGIVRDPSRMQAALDEAFRYDSEILIEGFIDGREVQVGILNGKALGAIEIIPKGEFYDYEAKYTDGGAQHILPARLPEAVYAEVLRQGEKAHAALGCDCYSRVDFLVTETGDCFLLEVNTLPGMTDLSLLPEIAGGAGIAFGELVLRILQAASLKI.

Residues 107–299 (KVIFASAGLK…FGELVLRILQ (193 aa)) form the ATP-grasp domain. 134 to 185 (PLPVVVKPSREGSSVGVGIVRDPSRMQAALDEAFRYDSEILIEGFIDGREVQ) provides a ligand contact to ATP. Mg(2+) is bound by residues D253, E266, and N268.

It belongs to the D-alanine--D-alanine ligase family. It depends on Mg(2+) as a cofactor. Mn(2+) is required as a cofactor.

Its subcellular location is the cytoplasm. It catalyses the reaction 2 D-alanine + ATP = D-alanyl-D-alanine + ADP + phosphate + H(+). It functions in the pathway cell wall biogenesis; peptidoglycan biosynthesis. Cell wall formation. The polypeptide is D-alanine--D-alanine ligase (Citrifermentans bemidjiense (strain ATCC BAA-1014 / DSM 16622 / JCM 12645 / Bem) (Geobacter bemidjiensis)).